The primary structure comprises 292 residues: ATP phosphoribosyltransferase (292 aa).

Belongs to the ATP phosphoribosyltransferase family. Long subfamily. Mg(2+) serves as cofactor.

The protein localises to the cytoplasm. The enzyme catalyses 1-(5-phospho-beta-D-ribosyl)-ATP + diphosphate = 5-phospho-alpha-D-ribose 1-diphosphate + ATP. It participates in amino-acid biosynthesis; L-histidine biosynthesis; L-histidine from 5-phospho-alpha-D-ribose 1-diphosphate: step 1/9. Its activity is regulated as follows. Feedback inhibited by histidine. In terms of biological role, catalyzes the condensation of ATP and 5-phosphoribose 1-diphosphate to form N'-(5'-phosphoribosyl)-ATP (PR-ATP). Has a crucial role in the pathway because the rate of histidine biosynthesis seems to be controlled primarily by regulation of HisG enzymatic activity. This is ATP phosphoribosyltransferase from Desulfatibacillum aliphaticivorans.